Consider the following 448-residue polypeptide: UDP-N-acetylglucosamine--dolichyl-phosphate N-acetylglucosaminephosphotransferase (448 aa).

A helical membrane pass occupies residues 24–44 (ALVAAVGFGIAGYLATDMLIP). UDP-N-acetyl-alpha-D-glucosamine is bound by residues 58 to 60 (KDL) and Glu70. Helical transmembrane passes span 72-92 (IGAI…PFIF) and 129-149 (YLSA…DDLF). Lys156 lines the dolichyl phosphate pocket. The next 2 membrane-spanning stretches (helical) occupy residues 157-177 (FFLP…DFGV) and 202-222 (YVYM…LAGV). Dolichyl phosphate is bound at residue 210-218 (IFCPNSINI). Position 217 (Asn217) interacts with Mg(2+). Asn223 contacts UDP-N-acetyl-alpha-D-glucosamine. Transmembrane regions (helical) follow at residues 231–251 (IVLA…GPLA), 256–276 (HRFS…LWKW), 283–303 (VFVG…VGIL), and 309–329 (TMLL…PQLF). Residue Asp287 coordinates Mg(2+). 336-338 (RHR) lines the UDP-N-acetyl-alpha-D-glucosamine pocket. A run of 2 helical transmembrane segments spans residues 387–407 (EIIS…FGPM) and 419–439 (LQFC…AIIF).

This sequence belongs to the glycosyltransferase 4 family. Mg(2+) serves as cofactor.

It localises to the endoplasmic reticulum membrane. The catalysed reaction is a di-trans,poly-cis-dolichyl phosphate + UDP-N-acetyl-alpha-D-glucosamine = an N-acetyl-alpha-D-glucosaminyl-diphospho-di-trans,poly-cis-dolichol + UMP. It functions in the pathway protein modification; protein glycosylation. With respect to regulation, inhibited by natural nucleoside antibiotic tunicamycin, which acts as a structural analog and competitor of UDP-GlcNAc. Functionally, UDP-N-acetylglucosamine--dolichyl-phosphate N-acetylglucosaminephosphotransferase that operates in the biosynthetic pathway of dolichol-linked oligosaccharides, the glycan precursors employed in protein asparagine (N)-glycosylation. The assembly of dolichol-linked oligosaccharides begins on the cytosolic side of the endoplasmic reticulum membrane and finishes in its lumen. The sequential addition of sugars to dolichol pyrophosphate produces dolichol-linked oligosaccharides containing fourteen sugars, including two GlcNAcs, nine mannoses and three glucoses. Once assembled, the oligosaccharide is transferred from the lipid to nascent proteins by oligosaccharyltransferases. Catalyzes the initial step of dolichol-linked oligosaccharide biosynthesis, transfering GlcNAc-1-P from cytosolic UDP-GlcNAc onto the carrier lipid dolichyl phosphate (P-dolichol), yielding GlcNAc-P-P-dolichol embedded in the cytoplasmic leaflet of the endoplasmic reticulum membrane. This is UDP-N-acetylglucosamine--dolichyl-phosphate N-acetylglucosaminephosphotransferase (ALG7) from Saccharomyces cerevisiae (strain ATCC 204508 / S288c) (Baker's yeast).